A 467-amino-acid polypeptide reads, in one-letter code: Probable glutamate decarboxylase gamma (467 aa).

K278 is subject to N6-(pyridoxal phosphate)lysine.

Belongs to the group II decarboxylase family. It depends on pyridoxal 5'-phosphate as a cofactor.

It carries out the reaction L-glutamate + H(+) = 4-aminobutanoate + CO2. This is Probable glutamate decarboxylase gamma from Listeria innocua serovar 6a (strain ATCC BAA-680 / CLIP 11262).